A 209-amino-acid polypeptide reads, in one-letter code: Small ribosomal subunit protein uS3 (209 aa).

In terms of domain architecture, KH type-2 spans 38–107 (IRKFIKNKYY…RVVINIEEIK (70 aa)).

Belongs to the universal ribosomal protein uS3 family. As to quaternary structure, part of the 30S ribosomal subunit. Forms a tight complex with proteins S10 and S14.

Binds the lower part of the 30S subunit head. Binds mRNA in the 70S ribosome, positioning it for translation. In Thermotoga sp. (strain RQ2), this protein is Small ribosomal subunit protein uS3.